A 526-amino-acid chain; its full sequence is Cytochrome P450 monooxygenase 226 (526 aa).

A helical transmembrane segment spans residues 15 to 35 (FATSYAALTVAAVTLLAALLV). Asn219, Asn277, and Asn320 each carry an N-linked (GlcNAc...) asparagine glycan. Heme is bound at residue Cys452.

The protein belongs to the cytochrome P450 family. Requires heme as cofactor.

The protein resides in the membrane. Its pathway is secondary metabolite biosynthesis. Functionally, cytochrome P450 monooxygenase that is able to use anthracene, carbazole and phenanthrene as substrates for oxidation. These multifunctional properties against a series of polycyclic aromatic hydrocarbons (PAHs) suggest that CYP226 would play important roles, at least in part, in fungal metabolic systems involved in xenobiotic detoxification. This Postia placenta (strain ATCC 44394 / Madison 698-R) (Brown rot fungus) protein is Cytochrome P450 monooxygenase 226.